The following is a 175-amino-acid chain: ATP synthase subunit delta (175 aa).

This sequence belongs to the ATPase delta chain family. F-type ATPases have 2 components, F(1) - the catalytic core - and F(0) - the membrane proton channel. F(1) has five subunits: alpha(3), beta(3), gamma(1), delta(1), epsilon(1). F(0) has three main subunits: a(1), b(2) and c(10-14). The alpha and beta chains form an alternating ring which encloses part of the gamma chain. F(1) is attached to F(0) by a central stalk formed by the gamma and epsilon chains, while a peripheral stalk is formed by the delta and b chains.

It localises to the cell membrane. Its function is as follows. F(1)F(0) ATP synthase produces ATP from ADP in the presence of a proton or sodium gradient. F-type ATPases consist of two structural domains, F(1) containing the extramembraneous catalytic core and F(0) containing the membrane proton channel, linked together by a central stalk and a peripheral stalk. During catalysis, ATP synthesis in the catalytic domain of F(1) is coupled via a rotary mechanism of the central stalk subunits to proton translocation. In terms of biological role, this protein is part of the stalk that links CF(0) to CF(1). It either transmits conformational changes from CF(0) to CF(1) or is implicated in proton conduction. This is ATP synthase subunit delta from Elusimicrobium minutum (strain Pei191).